Reading from the N-terminus, the 125-residue chain is Ribonuclease P protein component (125 aa).

It belongs to the RnpA family. In terms of assembly, consists of a catalytic RNA component (M1 or rnpB) and a protein subunit.

The enzyme catalyses Endonucleolytic cleavage of RNA, removing 5'-extranucleotides from tRNA precursor.. Its function is as follows. RNaseP catalyzes the removal of the 5'-leader sequence from pre-tRNA to produce the mature 5'-terminus. It can also cleave other RNA substrates such as 4.5S RNA. The protein component plays an auxiliary but essential role in vivo by binding to the 5'-leader sequence and broadening the substrate specificity of the ribozyme. The chain is Ribonuclease P protein component from Clostridium botulinum (strain Eklund 17B / Type B).